Consider the following 412-residue polypeptide: Divalent metal cation transporter MntH (412 aa).

Residues 1–19 (MTNYRVESSSGRAARKTRL) lie on the Cytoplasmic side of the membrane. The chain crosses the membrane as a helical span at residues 20–39 (ALMGPAFIAAIGYIDPGNFA). At 40 to 51 (TNIQAGASFGYQ) the chain is on the periplasmic side. Residues 52 to 71 (LLWVVVWANLMAMLIQILSA) form a helical membrane-spanning segment. The Cytoplasmic segment spans residues 72-95 (KLGIATGKNLAEQIRDHYPRPVVW). Residues 96 to 118 (FYWVQAEIIAMATDLAEFIGAAI) form a helical membrane-spanning segment. Residues 119–125 (GFKLILG) lie on the Periplasmic side of the membrane. Residues 126-145 (VSLLQGAVLTGIATFLILML) form a helical membrane-spanning segment. Over 146–155 (QRRGQKPLEK) the chain is Cytoplasmic. A helical transmembrane segment spans residues 156–175 (VIGGLLLFVAAAYIVELIFS). Topologically, residues 176 to 196 (QPNLAQLGKGMVIPSLPTSEA) are periplasmic. A helical transmembrane segment spans residues 197 to 220 (VFLAAGVLGATIMPHVIYLHSSLT). The Cytoplasmic segment spans residues 221–238 (QHLHGGSRQQRYSATKWD). A helical transmembrane segment spans residues 239–258 (VAIAMTIAGFVNLAMMATAA). The Periplasmic segment spans residues 259–276 (AAFHFSGHTGVADLDEAY). The chain crosses the membrane as a helical span at residues 277-297 (LTLQPLLSHAAATVFGLSLVA). At 298–327 (AGLSSTVVGTLAGQVVMQGFIRFHIPLWVR) the chain is on the cytoplasmic side. Residues 328-344 (RTVTMLPSFIVILMGLD) traverse the membrane as a helical segment. The Periplasmic portion of the chain corresponds to 345-350 (PTRILV). The helical transmembrane segment at 351–370 (MSQVLLSFGIALALVPLLIF) threads the bilayer. At 371-387 (TSDSKLMGDLVNSKRVK) the chain is on the cytoplasmic side. A helical membrane pass occupies residues 388–406 (QTGWVIVVLVVALNIWLLV). Residues 407–412 (GTALGL) lie on the Periplasmic side of the membrane.

The protein belongs to the NRAMP family.

The protein resides in the cell inner membrane. Its function is as follows. H(+)-stimulated, divalent metal cation uptake system. The chain is Divalent metal cation transporter MntH from Escherichia coli O9:H4 (strain HS).